Consider the following 583-residue polypeptide: cAMP-dependent protein kinase catalytic subunit 3 (583 aa).

2 disordered regions span residues 51–75 (ATPTQRGKATGDNGTTGTPARTIGK) and 98–264 (SGTA…QTAK). 2 stretches are compositionally biased toward polar residues: residues 52–69 (TPTQRGKATGDNGTTGTP) and 98–107 (SGTAGSTSKL). Residues 108–162 (TTGNGSGNTMTSAYKIPSNNSTTANDSSNTETTFTFKLGRSNGRSSSNVASSESS) are compositionally biased toward low complexity. The segment covering 163-176 (DPLESDYSEEDPEQ) has biased composition (acidic residues). Positions 181–200 (PDPATNSRSSSTATTTTTSS) are enriched in low complexity. Residues 205–219 (NDVDEEDEEDDENEG) show a composition bias toward acidic residues. Basic and acidic residues predominate over residues 221-234 (GNGRDADDATHDSS). Over residues 235–256 (ESIEEDDGNETDDEEDDDESEE) the composition is skewed to acidic residues. Residues 274–528 (YQIIKTVGTG…ADDVKRHRWF (255 aa)) enclose the Protein kinase domain. ATP is bound by residues 280-288 (VGTGTFGRV) and Lys-303. Catalysis depends on Asp-397, which acts as the Proton acceptor. In terms of domain architecture, AGC-kinase C-terminal spans 529 to 583 (KHLNWNDVYSKKLKPPILPDVHHDGDTKNFDDYPEKDWKPAKAVDQRDLQYFNDF).

Belongs to the protein kinase superfamily. AGC Ser/Thr protein kinase family. cAMP subfamily. In terms of tissue distribution, expressed in embryonic mesoderm, and the optic lamina, wing disk and leg disks of third instar larvae. More abundant in adult head than adult body.

It catalyses the reaction L-seryl-[protein] + ATP = O-phospho-L-seryl-[protein] + ADP + H(+). The enzyme catalyses L-threonyl-[protein] + ATP = O-phospho-L-threonyl-[protein] + ADP + H(+). In terms of biological role, does not have an essential role in development. The chain is cAMP-dependent protein kinase catalytic subunit 3 (Pka-C3) from Drosophila melanogaster (Fruit fly).